The chain runs to 568 residues: DNA mismatch repair protein MutL (568 aa).

It belongs to the DNA mismatch repair MutL/HexB family.

This protein is involved in the repair of mismatches in DNA. It is required for dam-dependent methyl-directed DNA mismatch repair. May act as a 'molecular matchmaker', a protein that promotes the formation of a stable complex between two or more DNA-binding proteins in an ATP-dependent manner without itself being part of a final effector complex. The polypeptide is DNA mismatch repair protein MutL (Thermosipho africanus (strain TCF52B)).